Consider the following 102-residue polypeptide: uncharacterized protein (102 aa).

This is an uncharacterized protein from Ictaluridae (bullhead catfishes).